The following is a 743-amino-acid chain: UvrABC system protein C (743 aa).

In terms of domain architecture, GIY-YIG spans 16–95; it reads VDPGVYKFRD…IKEFDPRFNV (80 aa). A UVR domain is found at 208 to 243; it reads DKLVRQLEARMQQASEELDFETAARLRDDVGALRRA. Disordered stretches follow at residues 497–543 and 694–743; these read AEAA…QTGR and PSAD…TGVE. A compositionally biased stretch (acidic residues) spans 506-520; it reads QASDTDGDQVSDTDG. A compositionally biased stretch (polar residues) spans 734–743; the sequence is QSASQRTGVE.

This sequence belongs to the UvrC family. Interacts with UvrB in an incision complex.

The protein resides in the cytoplasm. In terms of biological role, the UvrABC repair system catalyzes the recognition and processing of DNA lesions. UvrC both incises the 5' and 3' sides of the lesion. The N-terminal half is responsible for the 3' incision and the C-terminal half is responsible for the 5' incision. In Rhodococcus opacus (strain B4), this protein is UvrABC system protein C.